The sequence spans 554 residues: Germacrene A synthase (554 aa).

Mg(2+) is bound by residues aspartate 306, aspartate 310, threonine 453, and glutamate 457. The DDXXD motif signature appears at 306–310; sequence DDTYD.

The protein belongs to the terpene synthase family. The cofactor is Mg(2+).

It is found in the cytoplasm. Its subcellular location is the cytosol. The catalysed reaction is (2E,6E)-farnesyl diphosphate = (+)-(R)-germacrene A + diphosphate. The protein operates within secondary metabolite biosynthesis; terpenoid biosynthesis. Sesquiterpene synthase involved in germacrene A biosynthesis. Also produces additional sesquiterpene products, including 4,5-di-epi-aristolochene, eremophilene, alpha-selinene. This chain is Germacrene A synthase, found in Pogostemon cablin (Patchouli).